The following is a 240-amino-acid chain: Uridylate kinase (240 aa).

Residue 13–16 (KASG) participates in ATP binding. Residues 21–26 (GSQGFG) are involved in allosteric activation by GTP. Gly-55 lines the UMP pocket. ATP-binding residues include Gly-56 and Arg-60. Residues Asp-75 and 136–143 (TGNPFFTT) each bind UMP. ATP is bound by residues Thr-163, Gln-164, Tyr-169, and Asp-172.

The protein belongs to the UMP kinase family. In terms of assembly, homohexamer.

Its subcellular location is the cytoplasm. The enzyme catalyses UMP + ATP = UDP + ADP. Its pathway is pyrimidine metabolism; CTP biosynthesis via de novo pathway; UDP from UMP (UMPK route): step 1/1. Its activity is regulated as follows. Allosterically activated by GTP. Inhibited by UTP. In terms of biological role, catalyzes the reversible phosphorylation of UMP to UDP. This chain is Uridylate kinase, found in Brucella melitensis biotype 1 (strain ATCC 23456 / CCUG 17765 / NCTC 10094 / 16M).